Reading from the N-terminus, the 319-residue chain is 7,8-didemethyl-8-hydroxy-5-deazariboflavin synthase (319 aa).

One can recognise a Radical SAM core domain in the interval 6–236; that stretch reads VTYSPAFTLV…AEITIQIPPN (231 aa). Residues cysteine 20, cysteine 24, and cysteine 27 each coordinate [4Fe-4S] cluster.

The protein belongs to the radical SAM superfamily. CofG family. In terms of assembly, consists of two subunits, CofG and CofH. It depends on [4Fe-4S] cluster as a cofactor.

The enzyme catalyses 5-amino-5-(4-hydroxybenzyl)-6-(D-ribitylimino)-5,6-dihydrouracil + S-adenosyl-L-methionine = 7,8-didemethyl-8-hydroxy-5-deazariboflavin + 5'-deoxyadenosine + L-methionine + NH4(+) + H(+). Its pathway is cofactor biosynthesis; coenzyme F0 biosynthesis. Its function is as follows. Catalyzes the radical-mediated synthesis of 7,8-didemethyl-8-hydroxy-5-deazariboflavin from 5-amino-5-(4-hydroxybenzyl)-6-(D-ribitylimino)-5,6-dihydrouracil. The protein is 7,8-didemethyl-8-hydroxy-5-deazariboflavin synthase of Gloeobacter violaceus (strain ATCC 29082 / PCC 7421).